The sequence spans 156 residues: Small ribosomal subunit protein uS7 (156 aa).

Belongs to the universal ribosomal protein uS7 family. As to quaternary structure, part of the 30S ribosomal subunit. Contacts proteins S9 and S11.

Functionally, one of the primary rRNA binding proteins, it binds directly to 16S rRNA where it nucleates assembly of the head domain of the 30S subunit. Is located at the subunit interface close to the decoding center, probably blocks exit of the E-site tRNA. The protein is Small ribosomal subunit protein uS7 of Streptomyces avermitilis (strain ATCC 31267 / DSM 46492 / JCM 5070 / NBRC 14893 / NCIMB 12804 / NRRL 8165 / MA-4680).